A 483-amino-acid chain; its full sequence is 2-methylcitrate dehydratase (483 aa).

The protein belongs to the PrpD family. Monomer.

The catalysed reaction is (2S,3S)-2-methylcitrate = 2-methyl-cis-aconitate + H2O. The enzyme catalyses citrate = D-threo-isocitrate. It participates in organic acid metabolism; propanoate degradation. It functions in the pathway carbohydrate metabolism; tricarboxylic acid cycle; isocitrate from oxaloacetate: step 2/2. Functionally, involved in the catabolism of short chain fatty acids (SCFA) via the tricarboxylic acid (TCA)(acetyl degradation route) and via the 2-methylcitrate cycle I (propionate degradation route). Catalyzes the dehydration of 2-methylcitrate (2-MC) to yield the cis isomer of 2-methyl-aconitate. It is also able to catalyze the dehydration of citrate and the hydration of cis-aconitate at a lower rate. Due to its broad substrate specificity, it seems to be responsible for the residual aconitase activity of the acnAB-null mutant. This chain is 2-methylcitrate dehydratase, found in Escherichia coli (strain K12).